Here is a 359-residue protein sequence, read N- to C-terminus: MSGLTVSIRGRNGAFAIEAGFAAEGGVTALFGHSGAGKTTLLKMIAGTLRPENGRIAVGDFTLFDAQKGINLPPEKRRIGYVFQDARLFAYMSVKRNLTYARWAGHRQATRSFDEVVALLGIGHLLDRRPSTLSGGERQRVAIGRALLSDPALLLLDEPLSSLDHARRQEILPFIERLRDESHVPIVYVSHEIDEVARLADQIVLLSAGRVTASGAAADIFPLIDAESEGGGVLLEGIVSAYDERYKLAEIDLGGASFQLSDAGLKQTMHVRLRVRARDVSIARKIPEAISIRNLLPVTVTGIERGEGPNAHVFLDFRGRRLGARLTRRSVDDLGLSVGDQVVALVKAVSVDRAAIREK.

Positions M1 to V233 constitute an ABC transporter domain. An ATP-binding site is contributed by G32 to T39. A Mop domain is found at A289–A355.

It belongs to the ABC transporter superfamily. Molybdate importer (TC 3.A.1.8) family. In terms of assembly, the complex is composed of two ATP-binding proteins (ModC), two transmembrane proteins (ModB) and a solute-binding protein (ModA).

It is found in the cell inner membrane. The catalysed reaction is molybdate(out) + ATP + H2O = molybdate(in) + ADP + phosphate + H(+). Its function is as follows. Part of the ABC transporter complex ModABC involved in molybdenum import. Responsible for energy coupling to the transport system. This Brucella melitensis biotype 1 (strain ATCC 23456 / CCUG 17765 / NCTC 10094 / 16M) protein is Molybdenum import ATP-binding protein ModC.